Reading from the N-terminus, the 580-residue chain is RuBisCO large subunit-binding protein subunit alpha, chloroplastic (580 aa).

Residues 1–17 (MAQSQLAKGSRQTTGRP) are compositionally biased toward polar residues. The interval 1-24 (MAQSQLAKGSRQTTGRPFQNKPAR) is disordered.

This sequence belongs to the chaperonin (HSP60) family. As to quaternary structure, oligomer of probably six alpha and six beta subunits.

It is found in the plastid. Its subcellular location is the chloroplast. This protein binds RuBisCO small and large subunits and is implicated in the assembly of the enzyme oligomer. The protein is RuBisCO large subunit-binding protein subunit alpha, chloroplastic of Chlamydomonas reinhardtii (Chlamydomonas smithii).